Consider the following 960-residue polypeptide: Collagenase ColA (960 aa).

Positions 1-30 (MNKNLRFTQMMIGISTMALSFGSIQTQVSA) are cleaved as a signal peptide. A propeptide spanning residues 31 to 92 (EETAPYNILQ…KRDEIQLKQS (62 aa)) is cleaved from the precursor. The segment at 93-365 (YTLAELNKMP…AVEQMKTNYG (273 aa)) is activator domain. Positions 93–764 (YTLAELNKMP…VFHGVATEEK (672 aa)) are S1 metalloprotease domain. The interval 375 to 644 (DLQKIREEGK…MQQLIDNQDK (270 aa)) is catalytic subdomain. A Zn(2+)-binding site is contributed by histidine 500. Glutamate 501 is a catalytic residue. Residues histidine 504 and glutamate 532 each contribute to the Zn(2+) site. A helper subdomain region spans residues 652-764 (NDYLIQHAPK…VFHGVATEEK (113 aa)). The region spanning 768 to 849 (TTIVNMNGPY…ESKEQTKVTV (82 aa)) is the PKD domain. The span at 836–845 (SRGKESKEQT) shows a compositional bias: basic and acidic residues. The segment at 836–859 (SRGKESKEQTKVTVKQDPQTSESY) is disordered. The segment covering 846 to 857 (KVTVKQDPQTSE) has biased composition (polar residues). Positions 852–960 (DPQTSESYEE…KNGEYSLLVK (109 aa)) are collagen-binding domain.

This sequence belongs to the peptidase M9B family. Collagenase subfamily. Ca(2+) is required as a cofactor. Zn(2+) serves as cofactor.

The protein resides in the secreted. The catalysed reaction is Digestion of native collagen in the triple helical region at Xaa-|-Gly bonds. With synthetic peptides, a preference is shown for Gly at P3 and P1', Pro and Ala at P2 and P2', and hydroxyproline, Ala or Arg at P3'.. Functionally, acts as a true collagenase, which is highly active and efficiently targets native tropocollagen. In vitro, can also cleave gelatin and the synthetic peptide FALGPA (furylacryloyl-Leu-Gly-Pro-Ala). May contribute to bacterial virulence in endophthalmitis or opportunistic infections via collagen degradation in the host extracellular matrix (ECM). This is Collagenase ColA from Bacillus cereus (strain ATCC 14579 / DSM 31 / CCUG 7414 / JCM 2152 / NBRC 15305 / NCIMB 9373 / NCTC 2599 / NRRL B-3711).